We begin with the raw amino-acid sequence, 134 residues long: Profilin-1 (134 aa).

It belongs to the profilin family. In terms of assembly, occurs in many kinds of cells as a complex with monomeric actin in a 1:1 ratio.

The protein localises to the cytoplasm. It localises to the cytoskeleton. Functionally, binds to actin and affects the structure of the cytoskeleton. At high concentrations, profilin prevents the polymerization of actin, whereas it enhances it at low concentrations. By binding to PIP2, it inhibits the formation of IP3 and DG. The polypeptide is Profilin-1 (PRO1) (Nicotiana tabacum (Common tobacco)).